Reading from the N-terminus, the 122-residue chain is Large ribosomal subunit protein bL19 (122 aa).

It belongs to the bacterial ribosomal protein bL19 family.

This protein is located at the 30S-50S ribosomal subunit interface and may play a role in the structure and function of the aminoacyl-tRNA binding site. The polypeptide is Large ribosomal subunit protein bL19 (Chlamydia felis (strain Fe/C-56) (Chlamydophila felis)).